The chain runs to 388 residues: Chaperone protein DnaJ (388 aa).

The region spanning 6–71 is the J domain; the sequence is DYYEILGVPR…EKRKLYDQFG (66 aa). Residues 147–229 form a CR-type zinc finger; that stretch reads GCEKEIPIYR…CGGTGNVRRQ (83 aa). 8 residues coordinate Zn(2+): Cys160, Cys163, Cys177, Cys180, Cys203, Cys206, Cys217, and Cys220. CXXCXGXG motif repeat units lie at residues 160–167, 177–184, 203–210, and 217–224; these read CSVCGGSG, CQKCGGTG, CDACGGTG, and CRECGGTG.

This sequence belongs to the DnaJ family. In terms of assembly, homodimer. Zn(2+) serves as cofactor.

Its subcellular location is the cytoplasm. In terms of biological role, participates actively in the response to hyperosmotic and heat shock by preventing the aggregation of stress-denatured proteins and by disaggregating proteins, also in an autonomous, DnaK-independent fashion. Unfolded proteins bind initially to DnaJ; upon interaction with the DnaJ-bound protein, DnaK hydrolyzes its bound ATP, resulting in the formation of a stable complex. GrpE releases ADP from DnaK; ATP binding to DnaK triggers the release of the substrate protein, thus completing the reaction cycle. Several rounds of ATP-dependent interactions between DnaJ, DnaK and GrpE are required for fully efficient folding. Also involved, together with DnaK and GrpE, in the DNA replication of plasmids through activation of initiation proteins. The protein is Chaperone protein DnaJ of Caldicellulosiruptor bescii (strain ATCC BAA-1888 / DSM 6725 / KCTC 15123 / Z-1320) (Anaerocellum thermophilum).